Consider the following 429-residue polypeptide: Ribosomal RNA small subunit methyltransferase B (429 aa).

S-adenosyl-L-methionine contacts are provided by residues 254 to 260 (CAAPGGK), D277, D303, and D322. C375 (nucleophile) is an active-site residue.

The protein belongs to the class I-like SAM-binding methyltransferase superfamily. RsmB/NOP family.

Its subcellular location is the cytoplasm. The enzyme catalyses cytidine(967) in 16S rRNA + S-adenosyl-L-methionine = 5-methylcytidine(967) in 16S rRNA + S-adenosyl-L-homocysteine + H(+). Its function is as follows. Specifically methylates the cytosine at position 967 (m5C967) of 16S rRNA. The chain is Ribosomal RNA small subunit methyltransferase B from Shigella flexneri.